A 285-amino-acid chain; its full sequence is Protoheme IX farnesyltransferase (285 aa).

The next 7 helical transmembrane spans lie at 16–36 (AKPK…ILAF), 40–60 (WYNL…SMII), 106–126 (LLAN…YVFV), 136–156 (WLNI…GYAA), 165–185 (SLLL…ALAL), 217–237 (ILMI…YVII), and 265–285 (YKFS…SFIL).

The protein belongs to the UbiA prenyltransferase family. Protoheme IX farnesyltransferase subfamily.

The protein localises to the cell membrane. The enzyme catalyses heme b + (2E,6E)-farnesyl diphosphate + H2O = Fe(II)-heme o + diphosphate. It participates in porphyrin-containing compound metabolism; heme O biosynthesis; heme O from protoheme: step 1/1. In terms of biological role, converts heme B (protoheme IX) to heme O by substitution of the vinyl group on carbon 2 of heme B porphyrin ring with a hydroxyethyl farnesyl side group. This chain is Protoheme IX farnesyltransferase, found in Sulfolobus acidocaldarius (strain ATCC 33909 / DSM 639 / JCM 8929 / NBRC 15157 / NCIMB 11770).